The sequence spans 362 residues: Beta-ketoacyl-[acyl-carrier-protein] synthase III 2 (362 aa).

Residues Cys113 and His251 contribute to the active site. The segment at 252–256 (QANIR) is ACP-binding. Asn281 is an active-site residue.

The protein belongs to the thiolase-like superfamily. FabH family. As to quaternary structure, homodimer.

Its subcellular location is the cytoplasm. It carries out the reaction malonyl-[ACP] + acetyl-CoA + H(+) = 3-oxobutanoyl-[ACP] + CO2 + CoA. It functions in the pathway lipid metabolism; fatty acid biosynthesis. In terms of biological role, catalyzes the condensation reaction of fatty acid synthesis by the addition to an acyl acceptor of two carbons from malonyl-ACP. Catalyzes the first condensation reaction which initiates fatty acid synthesis and may therefore play a role in governing the total rate of fatty acid production. Possesses both acetoacetyl-ACP synthase and acetyl transacylase activities. Its substrate specificity determines the biosynthesis of branched-chain and/or straight-chain of fatty acids. The protein is Beta-ketoacyl-[acyl-carrier-protein] synthase III 2 of Vibrio vulnificus (strain YJ016).